The sequence spans 129 residues: Histone H2A-III (129 aa).

Belongs to the histone H2A family. As to quaternary structure, the nucleosome is a histone octamer containing two molecules each of H2A, H2B, H3 and H4 assembled in one H3-H4 heterotetramer and two H2A-H2B heterodimers. The octamer wraps approximately 147 bp of DNA.

It localises to the nucleus. It is found in the chromosome. Functionally, core component of nucleosome. Nucleosomes wrap and compact DNA into chromatin, limiting DNA accessibility to the cellular machineries which require DNA as a template. Histones thereby play a central role in transcription regulation, DNA repair, DNA replication and chromosomal stability. DNA accessibility is regulated via a complex set of post-translational modifications of histones, also called histone code, and nucleosome remodeling. This Volvox carteri (Green alga) protein is Histone H2A-III.